Reading from the N-terminus, the 239-residue chain is tRNA (guanine-N(1)-)-methyltransferase (239 aa).

S-adenosyl-L-methionine contacts are provided by residues Gly109 and 133–138 (IGDYVL). Disordered regions lie at residues 163 to 187 (PASR…YTRP) and 217 to 239 (QRTR…DPGR). Composition is skewed to basic and acidic residues over residues 165–180 (SRHD…RRLE) and 217–226 (QRTRERRPEL).

Belongs to the RNA methyltransferase TrmD family. Homodimer.

Its subcellular location is the cytoplasm. The catalysed reaction is guanosine(37) in tRNA + S-adenosyl-L-methionine = N(1)-methylguanosine(37) in tRNA + S-adenosyl-L-homocysteine + H(+). In terms of biological role, specifically methylates guanosine-37 in various tRNAs. The chain is tRNA (guanine-N(1)-)-methyltransferase from Mycolicibacterium paratuberculosis (strain ATCC BAA-968 / K-10) (Mycobacterium paratuberculosis).